Here is a 789-residue protein sequence, read N- to C-terminus: Zinc finger FYVE domain-containing protein 1 (789 aa).

The interval 416–788 (MAHSSFFPDE…LSVMTGKGPL (373 aa)) is required for localization in the lipid droplets. FYVE-type zinc fingers lie at residues 598 to 659 (NSQI…EARN) and 715 to 775 (DHEI…KKPA). Zn(2+) contacts are provided by C604, C607, C620, C623, C628, C631, C651, C654, C721, C724, C737, C740, C745, C748, C767, and C770.

Interacts with RAB18 (in GTP-bound form). Interacts with BSCL2 in a RAB18-dependent manner. Interacts with ZW10.

The protein resides in the golgi apparatus. It is found in the golgi stack. Its subcellular location is the endoplasmic reticulum. The protein localises to the preautophagosomal structure. It localises to the lipid droplet. The protein resides in the mitochondrion. Functionally, plays a role in the formation of lipid droplets (LDs) which are storage organelles at the center of lipid and energy homeostasis. Regulates the morphology, size and distribution of LDs. Mediates the formation of endoplasmic reticulum-lipid droplets (ER-LD) contact sites by forming a complex with RAB18 and ZW10. Binds to phosphatidylinositol 3-phosphate (PtdIns3P) through FYVE-type zinc finger. This Pongo abelii (Sumatran orangutan) protein is Zinc finger FYVE domain-containing protein 1 (ZFYVE1).